Reading from the N-terminus, the 408-residue chain is 8-amino-7-oxononanoate synthase (408 aa).

R20 is a substrate binding site. Residue 119–120 participates in pyridoxal 5'-phosphate binding; that stretch reads GY. Position 144 (H144) interacts with substrate. Pyridoxal 5'-phosphate is bound by residues S190, H218, and T246. An N6-(pyridoxal phosphate)lysine modification is found at K249. T372 lines the substrate pocket.

Belongs to the class-II pyridoxal-phosphate-dependent aminotransferase family. BioF subfamily. In terms of assembly, homodimer. The cofactor is pyridoxal 5'-phosphate.

The catalysed reaction is 6-carboxyhexanoyl-[ACP] + L-alanine + H(+) = (8S)-8-amino-7-oxononanoate + holo-[ACP] + CO2. Its pathway is cofactor biosynthesis; biotin biosynthesis. Functionally, catalyzes the decarboxylative condensation of pimeloyl-[acyl-carrier protein] and L-alanine to produce 8-amino-7-oxononanoate (AON), [acyl-carrier protein], and carbon dioxide. The chain is 8-amino-7-oxononanoate synthase from Leptothrix cholodnii (strain ATCC 51168 / LMG 8142 / SP-6) (Leptothrix discophora (strain SP-6)).